The sequence spans 210 residues: MQNRPIIIGVTGGSGGGKTSVSRAILSNFPNEKIAMIEHDSYYKDQSHLTFEERIKTNYDHPFAFDTDLMIEQIKELLAGRPVDIPTYDYTEHTRSSKTYRQEPKDVFIVEGILVLEDQRLRDLMDIKIFVDTDDDVRIIRRIKRDMEERGRSLDSVIEQYLGVVKPMYHQFIEPTKRYADVIIPEGASNKVAIDLITTKIEKILKEARN.

12-19 (GGSGGGKT) contributes to the ATP binding site.

The protein belongs to the uridine kinase family.

It localises to the cytoplasm. The enzyme catalyses uridine + ATP = UMP + ADP + H(+). The catalysed reaction is cytidine + ATP = CMP + ADP + H(+). Its pathway is pyrimidine metabolism; CTP biosynthesis via salvage pathway; CTP from cytidine: step 1/3. It participates in pyrimidine metabolism; UMP biosynthesis via salvage pathway; UMP from uridine: step 1/1. The sequence is that of Uridine kinase from Streptococcus gordonii (strain Challis / ATCC 35105 / BCRC 15272 / CH1 / DL1 / V288).